The following is a 128-amino-acid chain: MYEAEDHEFFDVLYQQWSHTTEAKSRYWVVEFDGDEHLQWQVFAVDQTDGSKLWLGSFHREQDADFVAGLHGALPDLIRRLHDATDEAVRKDEANDIAQGQLAEALLENQGLKAQILELERQLDKETS.

The chain is Gene 39 protein (39) from Mycobacterium (Mycobacteriophage D29).